Reading from the N-terminus, the 280-residue chain is Shikimate dehydrogenase (NADP(+)) (280 aa).

Shikimate-binding positions include 23-25 and threonine 70; that span reads SLS. Residue lysine 74 is the Proton acceptor of the active site. Asparagine 95 and aspartate 111 together coordinate shikimate. NADP(+) is bound by residues 135-139, 158-163, and isoleucine 221; these read GSGGA and NRTISK. Shikimate is bound at residue tyrosine 223. Position 247 (glycine 247) interacts with NADP(+).

It belongs to the shikimate dehydrogenase family. As to quaternary structure, homodimer.

It catalyses the reaction shikimate + NADP(+) = 3-dehydroshikimate + NADPH + H(+). It participates in metabolic intermediate biosynthesis; chorismate biosynthesis; chorismate from D-erythrose 4-phosphate and phosphoenolpyruvate: step 4/7. Functionally, involved in the biosynthesis of the chorismate, which leads to the biosynthesis of aromatic amino acids. Catalyzes the reversible NADPH linked reduction of 3-dehydroshikimate (DHSA) to yield shikimate (SA). This Buchnera aphidicola subsp. Cinara cedri (strain Cc) protein is Shikimate dehydrogenase (NADP(+)).